The chain runs to 705 residues: Elongation factor G (705 aa).

Residues 8 to 294 form the tr-type G domain; the sequence is ELCRNFGIMA…SVIDYLPSPL (287 aa). Residues 17 to 24, 92 to 96, and 146 to 149 each bind GTP; these read AHIDAGKT, DTPGH, and NKMD.

It belongs to the TRAFAC class translation factor GTPase superfamily. Classic translation factor GTPase family. EF-G/EF-2 subfamily.

It is found in the cytoplasm. In terms of biological role, catalyzes the GTP-dependent ribosomal translocation step during translation elongation. During this step, the ribosome changes from the pre-translocational (PRE) to the post-translocational (POST) state as the newly formed A-site-bound peptidyl-tRNA and P-site-bound deacylated tRNA move to the P and E sites, respectively. Catalyzes the coordinated movement of the two tRNA molecules, the mRNA and conformational changes in the ribosome. This Cereibacter sphaeroides (strain ATCC 17023 / DSM 158 / JCM 6121 / CCUG 31486 / LMG 2827 / NBRC 12203 / NCIMB 8253 / ATH 2.4.1.) (Rhodobacter sphaeroides) protein is Elongation factor G.